The primary structure comprises 617 residues: Erythritol-mannosyl-transferase 1 (617 aa).

Disordered regions lie at residues 365 to 396 and 567 to 617; these read RNPGSPGFTSPLNSPTAVATPKWDEKRPIDSR and RQRK…VTNP. Positions 371-381 are enriched in polar residues; the sequence is GFTSPLNSPTA. Over residues 386–396 the composition is skewed to basic and acidic residues; the sequence is KWDEKRPIDSR. Residues 578–603 are compositionally biased toward polar residues; that stretch reads TAKTSLSVDTTEVATPTFTDTETSLS.

This sequence belongs to the UDP-glycosyltransferase family.

It participates in secondary metabolite biosynthesis. Its function is as follows. Glycosyltransferase; part of the gene cluster that mediates the biosynthesis of mannosylerythritol lipids (MELs), surface-active substances that enhance the availability of water-insoluble substrates. Depending on the number of acetyl groups, mannosylerythritol lipids can be differentiated into MEL A (fully acetylated), MEL B and MEL C (monoacetylated at R-6 and R-4, respectively), and the fully deacetylated MEL D. The first step in the pathway is the generation of mannosylerythritol by the glycosyltransferase EMT1 which catalyzes the transfer of GDP-mannose to the C-4 atom of meso-erythritol. This reaction has to be stereospecific, since only mannosyl-D-erythritol is generated. The produced disaccharide is subsequently acylated with fatty acids of various lengths by the acyltransferases MAC1 and MAC2 at positions C-2 and C-3, repectively. The existence of MEL derivatives which carry an acetyl group at C-2 implies that at least MAC1 also accepts acetyl-CoA as a donor. The final step of MEL biosynthesis is the acetylation of the fully acylated mannosylerythritol lipids catalyzed by the acetyl-CoA-dependent acetyltransferase MAT1. MAT1 displays a relaxed regioselectivity and is able to transfer acetylgroups to both positions C-4 and C-6 of the mannosyl moiety. In Pseudozyma antarctica (strain T-34) (Yeast), this protein is Erythritol-mannosyl-transferase 1.